A 407-amino-acid polypeptide reads, in one-letter code: SERPINE1 mRNA-binding protein 1 (407 aa).

At Ser25 the chain carries Phosphoserine. A disordered region spans residues 33–227 (AAENKKKEAG…GSGSHNWGTV (195 aa)). Low complexity predominate over residues 51–68 (AKSAAQAAAQTNSNAAGK). Lys52 carries the post-translational modification N6-acetyllysine; alternate. A Glycyl lysine isopeptide (Lys-Gly) (interchain with G-Cter in SUMO1); alternate cross-link involves residue Lys52. Lys68 bears the N6-acetyllysine mark. Composition is skewed to basic and acidic residues over residues 70–80 (LRKESQKDRKN), 89–114 (VDKK…RRPD), and 122–162 (KIID…DRPI). Lys102 is covalently cross-linked (Glycyl lysine isopeptide (Lys-Gly) (interchain with G-Cter in SUMO1); alternate). Residue Lys102 forms a Glycyl lysine isopeptide (Lys-Gly) (interchain with G-Cter in SUMO2) linkage. Lys102 is covalently cross-linked (Glycyl lysine isopeptide (Lys-Gly) (interchain with G-Cter in SUMO2); alternate). 2 positions are modified to N6-acetyllysine: Lys122 and Lys140. Residues 164–182 (GRGGLGRGRGGRGRGMGRG) show a composition bias toward gly residues. 2 positions are modified to omega-N-methylarginine: Arg165 and Arg188. Basic and acidic residues predominate over residues 183–199 (DGFDSRGKREFDRHSGS). Residues Ser197, Ser199, Ser203, Ser205, and Ser208 each carry the phosphoserine modification. Lys211 carries the post-translational modification N6-acetyllysine; alternate. Lys211 participates in a covalent cross-link: Glycyl lysine isopeptide (Lys-Gly) (interchain with G-Cter in SUMO2); alternate. Position 216 is an omega-N-methylarginine (Arg216). A Phosphoserine modification is found at Ser221. A Phosphothreonine modification is found at Thr226. Lys228 participates in a covalent cross-link: Glycyl lysine isopeptide (Lys-Gly) (interchain with G-Cter in SUMO1); alternate. Lys228 participates in a covalent cross-link: Glycyl lysine isopeptide (Lys-Gly) (interchain with G-Cter in SUMO2); alternate. Phosphoserine is present on Ser234. The segment covering 242–256 (ISYNCSDLDQSNVTE) has biased composition (polar residues). 2 disordered regions span residues 242–291 (ISYN…TLDE) and 327–407 (SKSE…PALA). A compositionally biased stretch (basic and acidic residues) spans 261–274 (GEEHPVADTENKEN). A Glycyl lysine isopeptide (Lys-Gly) (interchain with G-Cter in SUMO1); alternate cross-link involves residue Lys280. Lys280 is covalently cross-linked (Glycyl lysine isopeptide (Lys-Gly) (interchain with G-Cter in SUMO2)). Lys280 participates in a covalent cross-link: Glycyl lysine isopeptide (Lys-Gly) (interchain with G-Cter in SUMO2); alternate. Basic and acidic residues-rich tracts occupy residues 281–291 (EEGPKEMTLDE) and 327–341 (SKSE…VMDH). N6-acetyllysine is present on Lys328. The residue at position 329 (Ser329) is a Phosphoserine. The segment covering 362 to 371 (GRPGRGGRGG) has biased composition (gly residues). An omega-N-methylarginine mark is found at Arg363, Arg366, and Arg369. 2 positions are modified to phosphoserine: Ser391 and Ser393.

The protein belongs to the SERBP1-HABP4 family. In terms of assembly, associates with mature 80S ribosomes. Interacts with EEF2/eEF2; interaction sequesters EEF2/eEF2 at the A-site of the ribosome, thereby blocking the interaction sites of the mRNA-tRNA complex, promoting ribosome stabilization and hibernation. Interacts with SPIN1. Interacts with CHD3 and TDRD3. Interacts with ZDHHC17 (via ANK repeats). Post-translationally, phosphorylation by MTOR inhibits SERBP1 and relieves ribosome hibernation.

Ribosome-binding protein that promotes ribosome hibernation, a process during which ribosomes are stabilized in an inactive state and preserved from proteasomal degradation. Acts via its association with EEF2/eEF2 factor, sequestering EEF2/eEF2 at the A-site of the ribosome and promoting ribosome stabilization and storage in an inactive state. May also play a role in the regulation of mRNA stability: binds to the 3'-most 134 nt of the SERPINE1/PAI1 mRNA, a region which confers cyclic nucleotide regulation of message decay. Seems to play a role in PML-nuclear bodies formation. In Oryctolagus cuniculus (Rabbit), this protein is SERPINE1 mRNA-binding protein 1.